The following is a 527-amino-acid chain: Peptide chain release factor 3 (527 aa).

Positions 10–278 constitute a tr-type G domain; sequence DKRRTFAIIS…AFIEYAPAPL (269 aa). GTP-binding positions include 19–26, 87–91, and 141–144; these read SHPDAGKT, DTPGH, and NKLD.

This sequence belongs to the TRAFAC class translation factor GTPase superfamily. Classic translation factor GTPase family. PrfC subfamily.

It is found in the cytoplasm. Functionally, increases the formation of ribosomal termination complexes and stimulates activities of RF-1 and RF-2. It binds guanine nucleotides and has strong preference for UGA stop codons. It may interact directly with the ribosome. The stimulation of RF-1 and RF-2 is significantly reduced by GTP and GDP, but not by GMP. In Pelobacter propionicus (strain DSM 2379 / NBRC 103807 / OttBd1), this protein is Peptide chain release factor 3.